Here is a 102-residue protein sequence, read N- to C-terminus: UPF0213 protein Spro_0507 (102 aa).

A GIY-YIG domain is found at 6–81 (PTWHLYMLRM…KQLSKTQKER (76 aa)).

The protein belongs to the UPF0213 family.

The polypeptide is UPF0213 protein Spro_0507 (Serratia proteamaculans (strain 568)).